We begin with the raw amino-acid sequence, 687 residues long: Cytochrome b/c1 (687 aa).

A helical transmembrane segment spans residues 46–66 (FGAILSFMLGMQILTGVILAM). The heme b site is built by His-96 and His-110. Transmembrane regions (helical) follow at residues 126–146 (VLWILGVIIYLLMMATGFMGY) and 160–180 (VITNLFSAIPYFGESIVTLLW). Heme b-binding residues include His-197 and His-211. 6 helical membrane passes run 199-219 (LLPFLIAGVVVLHVWALHVAG), 247-267 (FGVACFLLLYAWFIFYMPNYL), 305-325 (LAGVIGMFSAIIILCFLPWLD), 337-357 (LAKQFFWIFVAVCILLGYLGA), 363-383 (IYVIAGRVLTVCYFAYFLIVL), and 410-430 (AVASVAIALVAAGALFLGSLQ). Residues 404-434 (LAKGGKAVASVAIALVAAGALFLGSLQDARA) form an internal signal sequence region. The 186-residue stretch at 458–643 (GALQRGLKVY…TVAQYSKDVT (186 aa)) folds into the Cytochrome c domain. Residues Cys-471, Cys-474, His-475, and Met-616 each coordinate heme c. A helical transmembrane segment spans residues 666–678 (VFLIIFAGLMYFT).

It belongs to the cytochrome b family. As to quaternary structure, the main subunits of complex b-c1 are: cytochrome b, cytochrome c1 and the Rieske protein. The cofactor is heme b. Requires heme c as cofactor. Post-translationally, the protein is post-translationally processed into cytochrome b and c1. This occurs by processing between residues 434 and 435 without processing between cytochrome b and the N-terminal of the putative signal sequence domain.

The protein localises to the cell inner membrane. Functionally, component of the ubiquinol-cytochrome c reductase complex (complex III or cytochrome b-c1 complex), which is a respiratory chain that generates an electrochemical potential coupled to ATP synthesis. c1 functions as an electron donor to cytochrome c. The polypeptide is Cytochrome b/c1 (fbcH) (Bradyrhizobium diazoefficiens (strain JCM 10833 / BCRC 13528 / IAM 13628 / NBRC 14792 / USDA 110)).